The chain runs to 193 residues: Chaperone protein TorD (193 aa).

The protein belongs to the TorD/DmsD family. TorD subfamily.

Its subcellular location is the cytoplasm. Its function is as follows. Involved in the biogenesis of TorA. Acts on TorA before the insertion of the molybdenum cofactor and, as a result, probably favors a conformation of the apoenzyme that is competent for acquiring the cofactor. In Histophilus somni (strain 129Pt) (Haemophilus somnus), this protein is Chaperone protein TorD.